We begin with the raw amino-acid sequence, 498 residues long: Lysine--tRNA ligase (498 aa).

2 residues coordinate Mg(2+): E401 and E408.

The protein belongs to the class-II aminoacyl-tRNA synthetase family. Homodimer. Requires Mg(2+) as cofactor.

Its subcellular location is the cytoplasm. It catalyses the reaction tRNA(Lys) + L-lysine + ATP = L-lysyl-tRNA(Lys) + AMP + diphosphate. This Dehalococcoides mccartyi (strain CBDB1) protein is Lysine--tRNA ligase.